The following is a 158-amino-acid chain: Succinate dehydrogenase [ubiquinone] cytochrome b small subunit B, mitochondrial (158 aa).

Residues 1–29 (MAALVRISSLCHRGVSPLLFRPSSLIRPL) constitute a mitochondrion transit peptide. Topologically, residues 30-62 (AVQQKDHDCSYLISARIHATPSNYAGSGSKAAT) are mitochondrial matrix. Residues 63–84 (MHWTGERILSIALLSLAPVAYF) traverse the membrane as a helical segment. Residues 85-89 (CPSPA) lie on the Mitochondrial intermembrane side of the membrane. Residues 90 to 110 (VDYSLAAALTLHGHWGLGQVV) form a helical membrane-spanning segment. Histidine 101 serves as a coordination point for heme b. Over 111 to 119 (TDYVHGDAK) the chain is Mitochondrial matrix. Tyrosine 113 is an a ubiquinone binding site. Residues 120-141 (IKMANAGLFVLSTVTFAGLCYF) form a helical membrane-spanning segment. Residues 142-158 (NYHDVGICKAVALLWSK) lie on the Mitochondrial intermembrane side of the membrane.

This sequence belongs to the CybS family. Component of complex II composed of four subunits: the flavoprotein (FP) SDHA, iron-sulfur protein (IP) SDHB, and a cytochrome b560 composed of SDHC and SDHD.

It localises to the mitochondrion inner membrane. It functions in the pathway carbohydrate metabolism; tricarboxylic acid cycle. Functionally, membrane-anchoring subunit of succinate dehydrogenase (SDH) that is involved in complex II of the mitochondrial electron transport chain and is responsible for transferring electrons from succinate to ubiquinone (coenzyme Q). SDH also oxidizes malate to the non-canonical enol form of oxaloacetate, enol-oxaloacetate. Enol-oxaloacetate, which is a potent inhibitor of the succinate dehydrogenase activity, is further isomerized into keto-oxaloacetate. The protein is Succinate dehydrogenase [ubiquinone] cytochrome b small subunit B, mitochondrial (sdhdb) of Danio rerio (Zebrafish).